The sequence spans 491 residues: Chromosomal replication initiator protein DnaA (491 aa).

The tract at residues 1 to 69 (MTTWDKCLKK…TIQECHGNDL (69 aa)) is domain I, interacts with DnaA modulators. Residues 69–154 (LIIEYSNKKF…KEDEEYSFGL (86 aa)) form a domain II region. A domain III, AAA+ region region spans residues 155-371 (PLKEKYVFDS…GALNRVLTTS (217 aa)). Residues G199, G201, K202, and T203 each contribute to the ATP site. Residues 372–491 (KFNHKDPTIE…YELLLNKISR (120 aa)) form a domain IV, binds dsDNA region.

Belongs to the DnaA family. Oligomerizes as a right-handed, spiral filament on DNA at oriC.

It localises to the cytoplasm. Its function is as follows. Plays an essential role in the initiation and regulation of chromosomal replication. ATP-DnaA binds to the origin of replication (oriC) to initiate formation of the DNA replication initiation complex once per cell cycle. Binds the DnaA box (a 9 base pair repeat at the origin) and separates the double-stranded (ds)DNA. Forms a right-handed helical filament on oriC DNA; dsDNA binds to the exterior of the filament while single-stranded (ss)DNA is stabiized in the filament's interior. The ATP-DnaA-oriC complex binds and stabilizes one strand of the AT-rich DNA unwinding element (DUE), permitting loading of DNA polymerase. After initiation quickly degrades to an ADP-DnaA complex that is not apt for DNA replication. Binds acidic phospholipids. The polypeptide is Chromosomal replication initiator protein DnaA (Francisella tularensis subsp. tularensis (strain WY96-3418)).